The primary structure comprises 130 residues: Protein ApaG (130 aa).

One can recognise an ApaG domain in the interval 3-127; that stretch reads RALTRDIEVT…FSLDTPDLRR (125 aa).

This is Protein ApaG from Allorhizobium ampelinum (strain ATCC BAA-846 / DSM 112012 / S4) (Agrobacterium vitis (strain S4)).